We begin with the raw amino-acid sequence, 227 residues long: 7-cyano-7-deazaguanine synthase (227 aa).

9-19 is a binding site for ATP; that stretch reads LSGGLDSATVL. Zn(2+)-binding residues include cysteine 189, cysteine 199, cysteine 202, and cysteine 205.

Belongs to the QueC family. Zn(2+) is required as a cofactor.

It carries out the reaction 7-carboxy-7-deazaguanine + NH4(+) + ATP = 7-cyano-7-deazaguanine + ADP + phosphate + H2O + H(+). Its pathway is purine metabolism; 7-cyano-7-deazaguanine biosynthesis. In terms of biological role, catalyzes the ATP-dependent conversion of 7-carboxy-7-deazaguanine (CDG) to 7-cyano-7-deazaguanine (preQ(0)). This Cupriavidus metallidurans (strain ATCC 43123 / DSM 2839 / NBRC 102507 / CH34) (Ralstonia metallidurans) protein is 7-cyano-7-deazaguanine synthase.